A 151-amino-acid polypeptide reads, in one-letter code: Methylated-DNA--protein-cysteine methyltransferase (151 aa).

Catalysis depends on Cys119, which acts as the Nucleophile; methyl group acceptor.

The protein belongs to the MGMT family.

It localises to the cytoplasm. It catalyses the reaction a 6-O-methyl-2'-deoxyguanosine in DNA + L-cysteinyl-[protein] = S-methyl-L-cysteinyl-[protein] + a 2'-deoxyguanosine in DNA. The catalysed reaction is a 4-O-methyl-thymidine in DNA + L-cysteinyl-[protein] = a thymidine in DNA + S-methyl-L-cysteinyl-[protein]. Functionally, involved in the cellular defense against the biological effects of O6-methylguanine (O6-MeG) and O4-methylthymine (O4-MeT) in DNA. Repairs the methylated nucleobase in DNA by stoichiometrically transferring the methyl group to a cysteine residue in the enzyme. This is a suicide reaction: the enzyme is irreversibly inactivated. This chain is Methylated-DNA--protein-cysteine methyltransferase, found in Saccharolobus islandicus (strain L.S.2.15 / Lassen #1) (Sulfolobus islandicus).